The sequence spans 479 residues: Glutamate--tRNA ligase 2 (479 aa).

A 'HIGH' region motif is present at residues 18–28 (PSPTGFLHIGG). Positions 244-248 (KLSKR) match the 'KMSKS' region motif. Residue Lys-247 participates in ATP binding.

This sequence belongs to the class-I aminoacyl-tRNA synthetase family. Glutamate--tRNA ligase type 1 subfamily. As to quaternary structure, monomer.

Its subcellular location is the cytoplasm. It catalyses the reaction tRNA(Glu) + L-glutamate + ATP = L-glutamyl-tRNA(Glu) + AMP + diphosphate. Catalyzes the attachment of glutamate to tRNA(Glu) in a two-step reaction: glutamate is first activated by ATP to form Glu-AMP and then transferred to the acceptor end of tRNA(Glu). This is Glutamate--tRNA ligase 2 from Maricaulis maris (strain MCS10) (Caulobacter maris).